The following is an 859-amino-acid chain: Cadherin-related family member 1 (859 aa).

The N-terminal stretch at 1 to 19 (MRRCRWAALALGLLRLCLA) is a signal peptide. Residues 20-700 (QANFAPHFFD…LIQTKDNPMK (681 aa)) are Extracellular-facing. Cadherin domains are found at residues 36 to 135 (NGNM…APRF), 136 to 246 (IQEP…APVF), 247 to 353 (VGTP…PPTF), 359 to 472 (PQNR…VPKF), 473 to 576 (DSLY…PPQF), and 573 to 688 (PPQF…SPMA). 2 N-linked (GlcNAc...) asparagine glycosylation sites follow: Asn58 and Asn89. Asn296 is a glycosylation site (N-linked (GlcNAc...) asparagine). Residues 701–721 (AVGVLAGTMATVVAITVLIST) traverse the membrane as a helical segment. The Cytoplasmic portion of the chain corresponds to 722–859 (ATFWRNKKSN…KKSVHNKAYF (138 aa)). The tract at residues 770-838 (KEKPPNENCN…PKTMGSPVQS (69 aa)) is disordered. The span at 775-791 (NENCNNNSPESSLLPRA) shows a compositional bias: low complexity.

As to quaternary structure, interacts with PROM1. Undergoes proteolytic cleavage; produces a soluble 95 kDa N-terminal fragment and a 25 kDa cell-associated C-terminal fragment.

It localises to the cell membrane. Potential calcium-dependent cell-adhesion protein. May be required for the structural integrity of the outer segment (OS) of photoreceptor cells. The sequence is that of Cadherin-related family member 1 from Homo sapiens (Human).